We begin with the raw amino-acid sequence, 180 residues long: Acireductone dioxygenase (180 aa).

The Fe(2+) site is built by His-88, His-90, Glu-94, and His-133. Residues His-88, His-90, Glu-94, and His-133 each contribute to the Ni(2+) site.

This sequence belongs to the acireductone dioxygenase (ARD) family. In terms of assembly, monomer. Interacts with MMP14. The cofactor is Fe(2+). It depends on Ni(2+) as a cofactor.

Its subcellular location is the cytoplasm. The protein resides in the nucleus. It is found in the cell membrane. The enzyme catalyses 1,2-dihydroxy-5-(methylsulfanyl)pent-1-en-3-one + O2 = 4-methylsulfanyl-2-oxobutanoate + formate + 2 H(+). It catalyses the reaction 1,2-dihydroxy-5-(methylsulfanyl)pent-1-en-3-one + O2 = 3-(methylsulfanyl)propanoate + CO + formate + 2 H(+). The protein operates within amino-acid biosynthesis; L-methionine biosynthesis via salvage pathway; L-methionine from S-methyl-5-thio-alpha-D-ribose 1-phosphate: step 5/6. Catalyzes 2 different reactions between oxygen and the acireductone 1,2-dihydroxy-3-keto-5-methylthiopentene (DHK-MTPene) depending upon the metal bound in the active site. Fe-containing acireductone dioxygenase (Fe-ARD) produces formate and 2-keto-4-methylthiobutyrate (KMTB), the alpha-ketoacid precursor of methionine in the methionine recycle pathway. Ni-containing acireductone dioxygenase (Ni-ARD) produces methylthiopropionate, carbon monoxide and formate, and does not lie on the methionine recycle pathway. In Gallus gallus (Chicken), this protein is Acireductone dioxygenase.